The chain runs to 348 residues: Fructose-1,6-bisphosphatase class 1 (348 aa).

Glu92, Asp111, Leu113, and Asp114 together coordinate Mg(2+). Substrate is bound by residues 114 to 117 and Asn204; that span reads DGSS. Glu276 contributes to the Mg(2+) binding site.

The protein belongs to the FBPase class 1 family. In terms of assembly, homotetramer. Requires Mg(2+) as cofactor.

Its subcellular location is the cytoplasm. The catalysed reaction is beta-D-fructose 1,6-bisphosphate + H2O = beta-D-fructose 6-phosphate + phosphate. It functions in the pathway carbohydrate biosynthesis; gluconeogenesis. The chain is Fructose-1,6-bisphosphatase class 1 from Methylorubrum extorquens (strain CM4 / NCIMB 13688) (Methylobacterium extorquens).